The primary structure comprises 215 residues: Protein N-lysine methyltransferase METTL21A (215 aa).

S-adenosyl-L-methionine is bound by residues Trp47, 73–75, Asp94, Trp125, and Ala141; that span reads GAG.

This sequence belongs to the methyltransferase superfamily. METTL21 family.

It localises to the cytoplasm. It catalyses the reaction L-lysyl-[protein] + 3 S-adenosyl-L-methionine = N(6),N(6),N(6)-trimethyl-L-lysyl-[protein] + 3 S-adenosyl-L-homocysteine + 3 H(+). Protein-lysine methyltransferase that selectively trimethylates residues in heat shock protein 70 (HSP70) family members. This chain is Protein N-lysine methyltransferase METTL21A (mettl21a), found in Xenopus tropicalis (Western clawed frog).